A 638-amino-acid polypeptide reads, in one-letter code: MGQDQSSVFDLAAVAAASNGGNNDPLLPPARFIGDPQKPSRMPYNKYASYSEQIPFDYPERTWPGKRLQRAPRWCSVDLRDGNQALVNPMDSERKLRFWNLLVSMGFKEIEVGFPSASETDFDFIRMLIERELIPDDVTIVVLTQCREHLIRRTYEALKGAKRAIVHFYNSVSVLQREVVFRKNKEEIKKLATDAAELCKDLENEAKGIDLYYEYSPESFTGTEPEYAVEVCNAVIGVIKPTPEHPMIINLPATVEMTTPNVFADEVEYVSTHLDDRDSVVLSLHPHNDEGMGVAATELAVLAGADRVEGCLLGNGERTGNVDLVTLGLNWLTQGIDPQLDLSNVPEIRKTVEYCNQIKISERHPYAGNFVFTAFSGSHQDAIKKGLEARQVAAERAGADLDSFVWLVPYLPIDPKDIGRTYEAIIRVNSQSGKGGMAYLLKTNHNLDLPKRLQIEFDKIVQNYADTTKKEVKDGDIWRLFKDEYLPVEQSGMTAAGVVVGDTHDASLEPWGRLKLLKVAVSSGEDGSDTVLKARLLDRGVNVGDDEPVEREASGIGNGPIAAFLNAISNFGVEASIMDYVEHTMSVGTDAMAASYVECQIGEADDAQIVWGVGIDSSITTSALKAIISAINRSQRQR.

Residues 72–346 (PRWCSVDLRD…DPQLDLSNVP (275 aa)) enclose the Pyruvate carboxyltransferase domain. Positions 81, 285, 287, and 321 each coordinate Mg(2+). Positions 488–638 (VEQSGMTAAG…SAINRSQRQR (151 aa)) are regulatory domain.

This sequence belongs to the alpha-IPM synthase/homocitrate synthase family. LeuA type 2 subfamily. As to quaternary structure, homodimer. Mg(2+) serves as cofactor.

It localises to the cytoplasm. The enzyme catalyses 3-methyl-2-oxobutanoate + acetyl-CoA + H2O = (2S)-2-isopropylmalate + CoA + H(+). It participates in amino-acid biosynthesis; L-leucine biosynthesis; L-leucine from 3-methyl-2-oxobutanoate: step 1/4. In terms of biological role, catalyzes the condensation of the acetyl group of acetyl-CoA with 3-methyl-2-oxobutanoate (2-ketoisovalerate) to form 3-carboxy-3-hydroxy-4-methylpentanoate (2-isopropylmalate). The sequence is that of 2-isopropylmalate synthase from Bifidobacterium longum subsp. infantis (strain ATCC 15697 / DSM 20088 / JCM 1222 / NCTC 11817 / S12).